We begin with the raw amino-acid sequence, 54 residues long: Defensin-like protein 1 (54 aa).

4 cysteine pairs are disulfide-bonded: Cys-6–Cys-54, Cys-17–Cys-39, Cys-23–Cys-48, and Cys-27–Cys-50.

This sequence belongs to the DEFL family.

It is found in the secreted. In terms of biological role, possesses antifungal activity insensitive to inorganic cations. Causes germ tubes and hyphae to swell and form multiple hyphal buds. Binds to the plasma membrane of the fungus. Has no inhibitory effect on insect gut alpha-amylase. This Heuchera sanguinea (Coralbells) protein is Defensin-like protein 1.